The chain runs to 1685 residues: Collagen alpha-5(IV) chain (1685 aa).

The first 26 residues, 1-26 (MKLRGVSLAAGLFLLALSLWGQPAEA), serve as a signal peptide directing secretion. The tract at residues 27-41 (AACYGCSPGSKCDCS) is nonhelical region (NC2). Residues 42–1456 (GIKGEKGERG…QGPPGPPGTS (1415 aa)) are triple-helical region. A disordered region spans residues 49 to 1459 (ERGFPGLEGH…PGPPGTSSVA (1411 aa)). The segment covering 52–61 (FPGLEGHPGL) has biased composition (low complexity). The segment covering 62–73 (PGFPGPEGPPGP) has biased composition (pro residues). N-linked (GlcNAc...) asparagine glycosylation is present at Asn-125. The segment covering 188–212 (TGIPGPIGPPGPPGLMGPPGPPGLP) has biased composition (pro residues). Low complexity predominate over residues 214–225 (PKGNMGLNFQGP). Over residues 246–257 (EQKRPIDVEFQK) the composition is skewed to basic and acidic residues. Residues 266–281 (RGPPGPPGIRGPPGPP) show a composition bias toward pro residues. Composition is skewed to basic and acidic residues over residues 284–305 (EKGE…KDGE) and 324–333 (PGRDGEKGQK). Residues 413-430 (PPGISIPGPPGLDGQPGA) are compositionally biased toward low complexity. 4 stretches are compositionally biased toward pro residues: residues 431–445 (PGLP…PHIP), 493–505 (PGQP…PGPP), 620–630 (MGPPGFGPPGP), and 709–727 (PGPP…PGAP). Positions 788–797 (RTGLDGLPGP) are enriched in low complexity. Pro residues-rich tracts occupy residues 848–859 (PGPPGLDVPGPP) and 868–880 (PGAP…PGSP). 5 stretches are compositionally biased toward low complexity: residues 882–901 (LPGK…MGMM), 912–931 (IPGR…QGQP), 983–999 (YQGL…SGQP), 1010–1026 (NPGL…PGLK), and 1111–1120 (TPGAKGQPGL). A compositionally biased stretch (pro residues) spans 1139-1148 (PGNPGLPGEP). 2 stretches are compositionally biased toward gly residues: residues 1149–1158 (GPVGGGGHPG) and 1202–1211 (GQKGDGGLPG). Composition is skewed to pro residues over residues 1234 to 1243 (QGPPGPPGSP) and 1256 to 1274 (PQGP…PPGL). The span at 1295–1308 (LPGLKGDQGPPGLQ) shows a compositional bias: low complexity. Pro residues predominate over residues 1353-1362 (IGPPGPPGLP). The Collagen IV NC1 domain occupies 1461–1685 (GFLITRHSQT…SRCQVCMKRT (225 aa)). 6 disulfide bridges follow: Cys-1476/Cys-1567, Cys-1509/Cys-1564, Cys-1521/Cys-1527, Cys-1586/Cys-1681, Cys-1620/Cys-1678, and Cys-1632/Cys-1638. An S-Lysyl-methionine sulfilimine (Met-Lys) (interchain with K-1667) cross-link involves residue Met-1549. Residue Lys-1667 forms an S-Lysyl-methionine sulfilimine (Lys-Met) (interchain with M-1549) linkage.

Belongs to the type IV collagen family. There are six type IV collagen isoforms, alpha 1(IV)-alpha 6(IV), each of which can form a triple helix structure with 2 other chains to generate type IV collagen network. In terms of processing, prolines at the third position of the tripeptide repeating unit (G-X-Y) are hydroxylated in some or all of the chains. Post-translationally, type IV collagens contain numerous cysteine residues which are involved in inter- and intramolecular disulfide bonding. 12 of these, located in the NC1 domain, are conserved in all known type IV collagens. The trimeric structure of the NC1 domains is stabilized by covalent bonds between Lys and Met residues. In terms of tissue distribution, isoform 2 is found in kidney.

Its subcellular location is the secreted. It is found in the extracellular space. The protein resides in the extracellular matrix. The protein localises to the basement membrane. Its function is as follows. Type IV collagen is the major structural component of glomerular basement membranes (GBM), forming a 'chicken-wire' meshwork together with laminins, proteoglycans and entactin/nidogen. In Homo sapiens (Human), this protein is Collagen alpha-5(IV) chain (COL4A5).